A 431-amino-acid chain; its full sequence is uncharacterized protein (431 aa).

Disordered regions lie at residues 31-55, 257-291, and 365-431; these read VPAS…QAGV, QNGG…PKQD, and FQSP…HRKA. Residues 42 to 55 are compositionally biased toward polar residues; the sequence is VSASQPNGAHQAGV. Basic and acidic residues predominate over residues 412–425; it reads VEYRRGRSLRESRE.

This is an uncharacterized protein from Arabidopsis thaliana (Mouse-ear cress).